The chain runs to 474 residues: PTS system N-acetylmuramic acid-specific EIIBC component (474 aa).

One can recognise a PTS EIIB type-1 domain in the interval 1-89 (MAKEISSELL…SELLGEAPVQ (89 aa)). Residues 1–123 (MAKEISSELL…LAKFATIFTP (123 aa)) are Cytoplasmic-facing. Cys-29 (phosphocysteine intermediate; for EIIB activity) is an active-site residue. Residues 115 to 474 (AKFATIFTPL…LFGCRNVNLD (360 aa)) enclose the PTS EIIC type-1 domain. Residues 124–144 (LIPGFIAAGLLLGIATLIATV) form a helical membrane-spanning segment. Residues 145–157 (MHVPADAQGTLPD) lie on the Periplasmic side of the membrane. The helical transmembrane segment at 158–178 (ALNFMKVFSKGLFTFLVILVG) threads the bilayer. The Cytoplasmic segment spans residues 179 to 180 (YN). Residues 181 to 201 (AAQAFGGTGVNGAIIAALFLL) traverse the membrane as a helical segment. Residues 202-217 (GYNPAATTGYYAGFHD) lie on the Periplasmic side of the membrane. Residues 218-238 (FFGLPIDPRGNIIGVLIAAWA) form a helical membrane-spanning segment. Topologically, residues 239 to 260 (CARIEGMVRRFMPDDLDMLLTS) are cytoplasmic. A helical membrane pass occupies residues 261–281 (LITLLITATLAYLIIMPLGGW). Topologically, residues 282–301 (LFEGMSWLFMHLNSNPLGCA) are periplasmic. Residues 302 to 322 (VLAGLFLIAVVFGVHQGFIPV) form a helical membrane-spanning segment. The Cytoplasmic portion of the chain corresponds to 323–334 (YLALMDSQGFNS). The chain crosses the membrane as a helical span at residues 335 to 355 (LFPILSMAGAGQVGAALALYW). Residues 356–368 (RAQPHSALRSQVR) lie on the Periplasmic side of the membrane. A helical transmembrane segment spans residues 369–389 (GAIIPGLLGVGEPLIYGVTLP). Residues 390–393 (RMKP) are Cytoplasmic-facing. The chain crosses the membrane as a helical span at residues 394–414 (FITACLGGAAGGLFIGLIAWW). Residues 415–440 (GLPMGLNSAFGPSGLVALPLMTSAQG) lie on the Periplasmic side of the membrane. Residues 441–461 (ILPAMAVYAGGILVAWVCGFI) traverse the membrane as a helical segment. At 462–474 (FTTLFGCRNVNLD) the chain is on the cytoplasmic side.

Its subcellular location is the cell inner membrane. The catalysed reaction is N-acetyl-beta-D-muramate(out) + N(pros)-phospho-L-histidyl-[protein] = N-acetyl-beta-D-muramate 6-phosphate(in) + L-histidyl-[protein]. Its function is as follows. The phosphoenolpyruvate-dependent sugar phosphotransferase system (sugar PTS), a major carbohydrate active transport system, catalyzes the phosphorylation of incoming sugar substrates concomitantly with their translocation across the cell membrane. This system is involved in N-acetylmuramic acid (MurNAc) transport, yielding cytoplasmic MurNAc-6-P. Is also able to take up anhydro-N-acetylmuramic acid (anhMurNAc), but cannot phosphorylate the carbon 6, probably because of the 1,6-anhydro ring. This is PTS system N-acetylmuramic acid-specific EIIBC component (murP) from Escherichia coli O157:H7.